Here is an 828-residue protein sequence, read N- to C-terminus: Beta-galactosidase 13 (828 aa).

The first 23 residues, 1–23 (MKTTMAAAATCLVALLVVVLAEA), serve as a signal peptide directing secretion. N-linked (GlcNAc...) asparagine glycosylation is present at Asn-157. The active-site Proton donor is the Glu-187. Asn-198 and Asn-249 each carry an N-linked (GlcNAc...) asparagine glycan. Glu-259 functions as the Nucleophile in the catalytic mechanism. 8 N-linked (GlcNAc...) asparagine glycosylation sites follow: Asn-260, Asn-362, Asn-366, Asn-392, Asn-502, Asn-578, Asn-586, and Asn-615. Residues 746–828 (AEVGDAITLS…SGVLTVQASC (83 aa)) form the SUEL-type lectin domain.

Belongs to the glycosyl hydrolase 35 family.

Its subcellular location is the secreted. It is found in the extracellular space. It localises to the apoplast. The catalysed reaction is Hydrolysis of terminal non-reducing beta-D-galactose residues in beta-D-galactosides.. This Oryza sativa subsp. japonica (Rice) protein is Beta-galactosidase 13.